The sequence spans 501 residues: Nucleic-acid-binding protein from transposon X-element (501 aa).

Disordered regions lie at residues 20-71 and 105-128; these read SSPQ…GNSN and AAAKRDAASAGTTSSAKRAQSKPP. Residues 285–302 form a CCHC-type zinc finger; it reads VQCHRCQQIGHTAKYCRK. Disordered regions lie at residues 353–385 and 400–443; these read RPRSGVAGRTEVSDRPTPRGLAGGKEIPSSRGG and QPMS…TDAS. Residues 407 to 422 are compositionally biased toward low complexity; that stretch reads QQQKQKQQPYDGSPSR. The segment covering 434-443 has biased composition (polar residues); sequence GTLQRSTDAS.

It localises to the virion. Functionally, strongly basic protein that binds directly to retroviral RNA and may be involved in its packaging and in the reverse transcription process. The protein is Nucleic-acid-binding protein from transposon X-element of Drosophila melanogaster (Fruit fly).